The following is a 166-amino-acid chain: MYHPVVQVLIGLILVIILILGFYHLKKKSCKTDTDCKDNGHHCVRGTCTDISCLEAVKQDIKGINLDPSIRSCNYTPGFYTFNSTTADLQSPFGKTRIYYGDVYATWSSVDYCQSLCLQHNGCIAWEFDDEKESPGQGSCYFYTNSHPALKNSNDTTIMGIARNIL.

The Intravirion segment spans residues 1–4; sequence MYHP. A helical transmembrane segment spans residues 5 to 25; it reads VVQVLIGLILVIILILGFYHL. Topologically, residues 26–166 are virion surface; the sequence is KKKSCKTDTD…TIMGIARNIL (141 aa).

The protein belongs to the asfivirus envelope protein p22 family.

The protein localises to the virion membrane. It is found in the host cell membrane. The sequence is that of Putative membrane protein 164 from Ornithodoros (relapsing fever ticks).